The sequence spans 98 residues: AAIVKLGGDDGSLAFVPNNITVGAGESIEFINNAGFPHNIVFDEDAVPAGVDADAISAEDYLNSKGQTVVRKLTTPGTYGVYCDPHSGAGMKMTITVQ.

The Plastocyanin-like domain maps to 1–98; it reads AAIVKLGGDD…AGMKMTITVQ (98 aa). The Cu cation site is built by His-38, Cys-83, His-86, and Met-91.

It belongs to the plastocyanin family. Cu(2+) serves as cofactor.

The protein resides in the plastid. The protein localises to the chloroplast thylakoid membrane. In terms of biological role, participates in electron transfer between P700 and the cytochrome b6-f complex in photosystem I. The polypeptide is Plastocyanin (PETE) (Ulva prolifera (Green seaweed)).